Here is a 155-residue protein sequence, read N- to C-terminus: Small ribosomal subunit protein uS7cz/uS7cy (155 aa).

The protein belongs to the universal ribosomal protein uS7 family. As to quaternary structure, part of the 30S ribosomal subunit.

It localises to the plastid. The protein resides in the chloroplast. In terms of biological role, one of the primary rRNA binding proteins, it binds directly to 16S rRNA where it nucleates assembly of the head domain of the 30S subunit. This is Small ribosomal subunit protein uS7cz/uS7cy (rps7-A) from Psilotum nudum (Whisk fern).